The following is a 91-amino-acid chain: MSDSIVHVTDDSFEDEVLKSLEPVLVDYWADWCGPCKMIAPVLDEIAGEYAGRIKVAKLNIDENPNTPRRYGIRGIPTLMLSRQSEVEATK.

Residues Ser2 to Lys91 enclose the Thioredoxin domain. Residues Cys33 and Cys36 are joined by a disulfide bond.

It belongs to the thioredoxin family.

Functionally, participates in various redox reactions through the reversible oxidation of its active center dithiol to a disulfide and catalyzes dithiol-disulfide exchange reactions. The chain is Thioredoxin (trxA) from Thiocapsa roseopersicina.